Reading from the N-terminus, the 296-residue chain is Carboxylesterase YbfK (296 aa).

Catalysis depends on charge relay system residues Ser-129, Glu-244, and His-273.

The protein belongs to the AB hydrolase superfamily.

The protein resides in the cytoplasm. It catalyses the reaction a carboxylic ester + H2O = an alcohol + a carboxylate + H(+). In terms of biological role, shows carboxylesterase activity in vitro. The polypeptide is Carboxylesterase YbfK (ybfK) (Bacillus subtilis (strain 168)).